A 174-amino-acid polypeptide reads, in one-letter code: Chaperonin-like RBCX protein 1, chloroplastic (174 aa).

A chloroplast-targeting transit peptide spans 1 to 45; sequence MESSSSLLHHSYLSYLNPKFGKRPLVSYPLMQSSRKCKQTRICSN.

Belongs to the RbcX family. Homodimer. Interacts with rbcL, atpB and THI1.

Its subcellular location is the plastid. The protein localises to the chloroplast. Its function is as follows. Chaperone involved in RuBisCO assembly process. The polypeptide is Chaperonin-like RBCX protein 1, chloroplastic (Arabidopsis thaliana (Mouse-ear cress)).